Reading from the N-terminus, the 31-residue chain is Bacteriocin leucocin-B (31 aa).

It is found in the secreted. Functionally, inhibits a wide spectrum of lactic acid bacteria. In Leuconostoc mesenteroides, this protein is Bacteriocin leucocin-B.